The chain runs to 488 residues: UDP-N-acetylmuramate--L-alanine ligase (488 aa).

127–133 (GTHGKTT) lines the ATP pocket.

This sequence belongs to the MurCDEF family.

It is found in the cytoplasm. It carries out the reaction UDP-N-acetyl-alpha-D-muramate + L-alanine + ATP = UDP-N-acetyl-alpha-D-muramoyl-L-alanine + ADP + phosphate + H(+). Its pathway is cell wall biogenesis; peptidoglycan biosynthesis. Cell wall formation. In Shewanella sp. (strain MR-4), this protein is UDP-N-acetylmuramate--L-alanine ligase.